The primary structure comprises 462 residues: Cysteine--tRNA ligase (462 aa).

Position 28 (C28) interacts with Zn(2+). The short motif at 30-40 is the 'HIGH' region element; the sequence is VTIYDLCHIGH. Zn(2+) is bound by residues C211, H236, and E240. The 'KMSKS' region motif lies at 268-272; the sequence is KMSKS. K271 provides a ligand contact to ATP.

The protein belongs to the class-I aminoacyl-tRNA synthetase family. As to quaternary structure, monomer. Zn(2+) serves as cofactor.

It is found in the cytoplasm. The catalysed reaction is tRNA(Cys) + L-cysteine + ATP = L-cysteinyl-tRNA(Cys) + AMP + diphosphate. This Aliivibrio salmonicida (strain LFI1238) (Vibrio salmonicida (strain LFI1238)) protein is Cysteine--tRNA ligase.